A 722-amino-acid chain; its full sequence is D-(-)-3-hydroxybutyrate oligomer hydrolase (722 aa).

The span at 1 to 11 (MQQRHLSQSAH) shows a compositional bias: polar residues. The interval 1 to 20 (MQQRHLSQSAHSHGHGTRRA) is disordered. A signal peptide spans 1 to 36 (MQQRHLSQSAHSHGHGTRRAHRRNTIAIAVATLAVA). Residue Ser-327 is the Charge relay system of the active site. Residues 671–697 (PPSQVVRTTPRGGADTDTVGPRIQPSN) are disordered.

The protein belongs to the D-(-)-3-hydroxybutyrate oligomer hydrolase family.

It is found in the secreted. The catalysed reaction is (3R)-hydroxybutanoate dimer + H2O = 2 (R)-3-hydroxybutanoate + H(+). The protein operates within lipid metabolism; butanoate metabolism. Its function is as follows. Participates in the degradation of poly-3-hydroxybutyrate (PHB). It works downstream of poly(3-hydroxybutyrate) depolymerase, hydrolyzing D(-)-3-hydroxybutyrate oligomers of various length (3HB-oligomers) into 3HB-monomers. The polypeptide is D-(-)-3-hydroxybutyrate oligomer hydrolase (Cupriavidus metallidurans (strain ATCC 43123 / DSM 2839 / NBRC 102507 / CH34) (Ralstonia metallidurans)).